The chain runs to 297 residues: 4-hydroxy-tetrahydrodipicolinate synthase (297 aa).

Thr50 provides a ligand contact to pyruvate. The active-site Proton donor/acceptor is Tyr139. Catalysis depends on Lys167, which acts as the Schiff-base intermediate with substrate. Val209 contacts pyruvate.

The protein belongs to the DapA family. As to quaternary structure, homotetramer; dimer of dimers.

It localises to the cytoplasm. The catalysed reaction is L-aspartate 4-semialdehyde + pyruvate = (2S,4S)-4-hydroxy-2,3,4,5-tetrahydrodipicolinate + H2O + H(+). It participates in amino-acid biosynthesis; L-lysine biosynthesis via DAP pathway; (S)-tetrahydrodipicolinate from L-aspartate: step 3/4. Functionally, catalyzes the condensation of (S)-aspartate-beta-semialdehyde [(S)-ASA] and pyruvate to 4-hydroxy-tetrahydrodipicolinate (HTPA). This chain is 4-hydroxy-tetrahydrodipicolinate synthase, found in Microcystis aeruginosa (strain NIES-843 / IAM M-2473).